The sequence spans 341 residues: MFVDKTLMITGGTGSFGNAVLSRFLKSDIINDIKEIRIFSRDEKKQEDMRIALSNPKLKFYIGDVRNYKSIDEAMRGVDYVFHAAALKQVPTCEFYPMEAINTNVLGAENVLSAAINNKVAKVIVLSTDKAVYPINAMGLSKALMEKLSIAKARMCSQGETVLCVTRYGNVMASRGSVIPLFINQIKQGKELTITEPSMTRFLMSLVDSVDLVLYAFEHGRQGDIFVQKSPASTIEILAKALQEIFGSKNKIRFIGTRHGEKHYESLVSSEDMAKADDLGGYYRIPMDGRDLNYAKYFVEGEKKVALLEDYTSHNTKRLNLEEVKKLLLTLDYIQEELKNA.

It belongs to the polysaccharide synthase family.

It catalyses the reaction UDP-alpha-D-glucose = UDP-alpha-D-galactose. In terms of biological role, epimerizes UDP-galactose to UDP-glucose. The polypeptide is UDP-glucose 4-epimerase (capD) (Rickettsia akari (strain Hartford)).